We begin with the raw amino-acid sequence, 428 residues long: MTQAFQKVSAIRGMNDVLPGPSAQWERFEEIVRAWLQGYGYRNVRTPILEQTRLFTRGIGEVTDIVEKEMYTFTDALNGESLTMRPEMTAGVVRAAIEHNMLYERPHRVYSIGPVFRHERPQRGRYRQFHQIDVEALGFAGPDIDAELIVMLGRLWNTLGLADIRLELNSLGQPAERAAHRAALIEYLEKHVDILDEDGKRRLYTNPLRVLDTKNPALQEMANAAPRLFDFLGEASRAHFDGVCQRLDDAGIGYSLNPRLVRGLDYYNLTVFEWVTDRLGSQGTVCGGGRYDGLIELLGGKPAPAVGFAIGVERLLDLWEQSAGQQTPPECEVYVVHQGEGAQRLAARVGEDLRDAGLSVIVHAGAASFKSQFKRADASGARVAVILGDDEVATKTASVKYLRADAAGEGAQDKVALATLASVLKSKG.

Belongs to the class-II aminoacyl-tRNA synthetase family. As to quaternary structure, homodimer.

It is found in the cytoplasm. It catalyses the reaction tRNA(His) + L-histidine + ATP = L-histidyl-tRNA(His) + AMP + diphosphate + H(+). This chain is Histidine--tRNA ligase, found in Bordetella avium (strain 197N).